We begin with the raw amino-acid sequence, 143 residues long: Nucleoside diphosphate kinase (143 aa).

6 residues coordinate ATP: Lys11, Phe59, Arg87, Thr93, Arg104, and Asn114. His117 (pros-phosphohistidine intermediate) is an active-site residue.

The protein belongs to the NDK family. In terms of assembly, homotetramer. Mg(2+) serves as cofactor.

The protein localises to the cytoplasm. The catalysed reaction is a 2'-deoxyribonucleoside 5'-diphosphate + ATP = a 2'-deoxyribonucleoside 5'-triphosphate + ADP. It carries out the reaction a ribonucleoside 5'-diphosphate + ATP = a ribonucleoside 5'-triphosphate + ADP. In terms of biological role, major role in the synthesis of nucleoside triphosphates other than ATP. The ATP gamma phosphate is transferred to the NDP beta phosphate via a ping-pong mechanism, using a phosphorylated active-site intermediate. In Alcanivorax borkumensis (strain ATCC 700651 / DSM 11573 / NCIMB 13689 / SK2), this protein is Nucleoside diphosphate kinase.